A 450-amino-acid chain; its full sequence is Glutamyl-tRNA(Gln) amidotransferase subunit A, mitochondrial (450 aa).

Catalysis depends on charge relay system residues K47 and S122. Catalysis depends on S146, which acts as the Acyl-ester intermediate.

This sequence belongs to the amidase family. GatA subfamily. As to quaternary structure, subunit of the heterotrimeric GatFAB amidotransferase (AdT) complex, composed of A, B and F subunits.

The protein resides in the mitochondrion. It catalyses the reaction L-glutamyl-tRNA(Gln) + L-glutamine + ATP + H2O = L-glutaminyl-tRNA(Gln) + L-glutamate + ADP + phosphate + H(+). Its function is as follows. Allows the formation of correctly charged Gln-tRNA(Gln) through the transamidation of misacylated Glu-tRNA(Gln) in the mitochondria. The reaction takes place in the presence of glutamine and ATP through an activated gamma-phospho-Glu-tRNA(Gln). In Candida albicans (strain SC5314 / ATCC MYA-2876) (Yeast), this protein is Glutamyl-tRNA(Gln) amidotransferase subunit A, mitochondrial.